Reading from the N-terminus, the 526-residue chain is MPAVSGPGPLFCLLLLLLDPHSPETGCPPLRRFEYKLSFKGPRLALPGAGIPFWSHHGDAILGLEEVRLTPSMRNRSGAVWSRASVPFSAWEVEVQMRVTGLGRRGAQGMAVWYTRGRGHVGSVLGGLASWDGIGIFFDSPAEDTQDSPAIRVLASDGHIPSEQPGDGASQGLGSCHWDFRNRPHPFRARITYWGQRLRMSLNSGLTPSDPGEFCVDVGPLLLVPGGFFGVSAATGTLADDHDVLSFLTFSLSEPSPEVPPQPFLEMQQLRLARQLEGLWARLGLGTREDVTPKSDSEAQGEGERLFDLEETLGRHRRILQALRGLSKQLAQAERQWKKQLGPPGQARPDGGWALDASCQIPSTPGRGGHLSMSLNKDSAKVGALLHGQWTLLQALQEMRDAAVRMAAEAQVSYLPVGIEHHFLELDHILGLLQEELRGPAKAAAKAPRPPGQPPRASSCLQPGIFLFYLLIQTVGFFGYVHFRQELNKSLQECLSTGSLPLGPAPHTPRALGILRRQPLPASMPA.

The first 25 residues, 1–25 (MPAVSGPGPLFCLLLLLLDPHSPET), serve as a signal peptide directing secretion. Residues 26–462 (GCPPLRRFEY…QPPRASSCLQ (437 aa)) lie on the Lumenal side of the membrane. The region spanning 31-252 (RRFEYKLSFK…DVLSFLTFSL (222 aa)) is the L-type lectin-like domain. Residue N75 is glycosylated (N-linked (GlcNAc...) asparagine). C176 and C215 are oxidised to a cystine. Residues 463 to 483 (PGIFLFYLLIQTVGFFGYVHF) traverse the membrane as a helical segment. Residues 484-526 (RQELNKSLQECLSTGSLPLGPAPHTPRALGILRRQPLPASMPA) are Cytoplasmic-facing.

Highly expressed in normal and neoplastic prostate. Also expressed in cardiac atrium, salivary gland, spleen and selective cells in the CNS.

It localises to the endoplasmic reticulum-Golgi intermediate compartment membrane. The protein is Protein ERGIC-53-like (LMAN1L) of Homo sapiens (Human).